The chain runs to 247 residues: Ubiquinone biosynthesis O-methyltransferase (247 aa).

R41, G72, D93, and M136 together coordinate S-adenosyl-L-methionine.

Belongs to the methyltransferase superfamily. UbiG/COQ3 family.

It carries out the reaction a 3-demethylubiquinol + S-adenosyl-L-methionine = a ubiquinol + S-adenosyl-L-homocysteine + H(+). The catalysed reaction is a 3-(all-trans-polyprenyl)benzene-1,2-diol + S-adenosyl-L-methionine = a 2-methoxy-6-(all-trans-polyprenyl)phenol + S-adenosyl-L-homocysteine + H(+). It functions in the pathway cofactor biosynthesis; ubiquinone biosynthesis. Functionally, O-methyltransferase that catalyzes the 2 O-methylation steps in the ubiquinone biosynthetic pathway. In Bartonella tribocorum (strain CIP 105476 / IBS 506), this protein is Ubiquinone biosynthesis O-methyltransferase.